Reading from the N-terminus, the 597-residue chain is Elongation factor 4 (597 aa).

Residues 2–184 (DHIRNFSIIA…ALIAKVPPPK (183 aa)) form the tr-type G domain. Residues 14-19 (DHGKST) and 131-134 (NKID) each bind GTP.

It belongs to the TRAFAC class translation factor GTPase superfamily. Classic translation factor GTPase family. LepA subfamily.

The protein resides in the cell inner membrane. It carries out the reaction GTP + H2O = GDP + phosphate + H(+). In terms of biological role, required for accurate and efficient protein synthesis under certain stress conditions. May act as a fidelity factor of the translation reaction, by catalyzing a one-codon backward translocation of tRNAs on improperly translocated ribosomes. Back-translocation proceeds from a post-translocation (POST) complex to a pre-translocation (PRE) complex, thus giving elongation factor G a second chance to translocate the tRNAs correctly. Binds to ribosomes in a GTP-dependent manner. The sequence is that of Elongation factor 4 from Paraburkholderia phymatum (strain DSM 17167 / CIP 108236 / LMG 21445 / STM815) (Burkholderia phymatum).